The primary structure comprises 252 residues: Cell division protein ZapD (252 aa).

Belongs to the ZapD family. Interacts with FtsZ.

It is found in the cytoplasm. Functionally, cell division factor that enhances FtsZ-ring assembly. Directly interacts with FtsZ and promotes bundling of FtsZ protofilaments, with a reduction in FtsZ GTPase activity. In Cupriavidus necator (strain ATCC 17699 / DSM 428 / KCTC 22496 / NCIMB 10442 / H16 / Stanier 337) (Ralstonia eutropha), this protein is Cell division protein ZapD.